Reading from the N-terminus, the 474-residue chain is NAD(P) transhydrogenase subunit beta (474 aa).

9 consecutive transmembrane segments (helical) span residues 4–24 (GLVQAAYILAALLFIMSLAGL), 46–66 (IATIFGPHSEGTFWIIIAMII), 83–103 (MPELVAILHSFVGLAAVLVGF), 132–152 (VLTNIHNVEVFLGIFIGAVTF), 181–200 (LAALVVSALLMVAFLNNPES), 202–222 (FPVLLMTAIALAFGWHLVASI), 229–249 (VVVSMLNSYSGWAAAAAGFIL), 253–273 (LLIVTGALVGSSGAILSYIMC), and 321–341 (VIITPGYGMAVAQAQYPVADI).

This sequence belongs to the PNT beta subunit family. As to quaternary structure, heterodimer of an alpha and a beta chain.

Its subcellular location is the cell inner membrane. The enzyme catalyses NAD(+) + NADPH + H(+)(in) = NADH + NADP(+) + H(+)(out). Its function is as follows. The transhydrogenation between NADH and NADP is coupled to respiration and ATP hydrolysis and functions as a proton pump across the membrane. This Haemophilus influenzae (strain ATCC 51907 / DSM 11121 / KW20 / Rd) protein is NAD(P) transhydrogenase subunit beta (pntB).